The following is a 329-amino-acid chain: 4-hydroxythreonine-4-phosphate dehydrogenase (329 aa).

Positions 136 and 137 each coordinate substrate. His166, His211, and His266 together coordinate a divalent metal cation. Residues Lys274, Asn283, and Arg292 each contribute to the substrate site.

The protein belongs to the PdxA family. As to quaternary structure, homodimer. Zn(2+) is required as a cofactor. Requires Mg(2+) as cofactor. It depends on Co(2+) as a cofactor.

Its subcellular location is the cytoplasm. It carries out the reaction 4-(phosphooxy)-L-threonine + NAD(+) = 3-amino-2-oxopropyl phosphate + CO2 + NADH. The protein operates within cofactor biosynthesis; pyridoxine 5'-phosphate biosynthesis; pyridoxine 5'-phosphate from D-erythrose 4-phosphate: step 4/5. Functionally, catalyzes the NAD(P)-dependent oxidation of 4-(phosphooxy)-L-threonine (HTP) into 2-amino-3-oxo-4-(phosphooxy)butyric acid which spontaneously decarboxylates to form 3-amino-2-oxopropyl phosphate (AHAP). This is 4-hydroxythreonine-4-phosphate dehydrogenase from Escherichia coli O7:K1 (strain IAI39 / ExPEC).